Here is a 342-residue protein sequence, read N- to C-terminus: GTPase Obg (342 aa).

The Obg domain occupies 1–159 (MQFIDQAQIE…KLLRLELKLL (159 aa)). Residues 160–330 (AEVGIIGLPN…MLQEVWGILD (171 aa)) enclose the OBG-type G domain. GTP is bound by residues 166 to 173 (GLPNAGKS), 191 to 195 (FTTLI), 213 to 216 (DIPG), 280 to 283 (NKID), and 311 to 313 (SAV). S173 and T193 together coordinate Mg(2+).

Belongs to the TRAFAC class OBG-HflX-like GTPase superfamily. OBG GTPase family. As to quaternary structure, monomer. Mg(2+) serves as cofactor.

The protein resides in the cytoplasm. Its function is as follows. An essential GTPase which binds GTP, GDP and possibly (p)ppGpp with moderate affinity, with high nucleotide exchange rates and a fairly low GTP hydrolysis rate. Plays a role in control of the cell cycle, stress response, ribosome biogenesis and in those bacteria that undergo differentiation, in morphogenesis control. This chain is GTPase Obg, found in Nostoc sp. (strain PCC 7120 / SAG 25.82 / UTEX 2576).